A 423-amino-acid polypeptide reads, in one-letter code: Site-specific recombinase Flp (423 aa).

Residues 136–422 (GNSHSKKMLK…DYLSSYINRR (287 aa)) enclose the Tyr recombinase Flp-type domain. The active-site O-(3'-phospho-DNA)-tyrosine intermediate is the Tyr-343.

The protein belongs to the 'phage' integrase family. As to quaternary structure, homotetramer.

In terms of biological role, part of the plasmid amplification system, which corrects any decrease in copy number caused by a rare missegregation event. Catalyzes the recombination between the large inverted repetitions of the 2-micron plasmid during plasmid replication. This recombination event changes the direction of one of the two replication forks in the bidirectionally replicating molecule, effectively resulting in multiple rounds of replication from a single initiation event. Binds specifically to the FLP recognition target (FRT) site where it induces DNA to bend. Three types of bend exist. Type I is approximately 60 degrees and results from 1 FLP molecule binding to 1 symmetry element. Type II is &gt;144 degrees and results from FLP molecules binding to symmetry elements a and b. Type III is approximately 65 degrees and results from FLP molecules binding to symmetry elements b and c. The polypeptide is Site-specific recombinase Flp (FLP1) (Saccharomyces cerevisiae (strain ATCC 204508 / S288c) (Baker's yeast)).